We begin with the raw amino-acid sequence, 170 residues long: Ribosome maturation factor RimM (170 aa).

The 72-residue stretch at 92–163 (KEGWYYFELE…RMDVELPPGL (72 aa)) folds into the PRC barrel domain.

The protein belongs to the RimM family. In terms of assembly, binds ribosomal protein uS19.

It localises to the cytoplasm. Its function is as follows. An accessory protein needed during the final step in the assembly of 30S ribosomal subunit, possibly for assembly of the head region. Essential for efficient processing of 16S rRNA. May be needed both before and after RbfA during the maturation of 16S rRNA. It has affinity for free ribosomal 30S subunits but not for 70S ribosomes. This is Ribosome maturation factor RimM from Desulfitobacterium hafniense (strain Y51).